We begin with the raw amino-acid sequence, 56 residues long: Preprotein translocase subunit SecG (56 aa).

Residues 1 to 29 (MAKEKATLPPTGAGLMRFFDEDTRAVKVS) lie on the Cytoplasmic side of the membrane. Residues 30 to 49 (PKGVIALTLLLIAFEFILHM) form a helical membrane-spanning segment. The Extracellular portion of the chain corresponds to 50–56 (FGSSIFG).

The protein belongs to the SEC61-beta family. Component of the protein translocase complex. Heterotrimer consisting of alpha (SecY), beta (SecG) and gamma (SecE) subunits. Can form oligomers of the heterotrimer.

It localises to the cell membrane. Functionally, involved in protein export. The function of the beta subunit is unknown, but it may be involved in stabilization of the trimeric complex. In Thermococcus kodakarensis (strain ATCC BAA-918 / JCM 12380 / KOD1) (Pyrococcus kodakaraensis (strain KOD1)), this protein is Preprotein translocase subunit SecG.